The following is a 711-amino-acid chain: DNA ligase (711 aa).

Positions 1 to 29 (MSEDAIGQQVPAAQEAAAGAEPNSAARER) are disordered. The segment covering 12-25 (AAQEAAAGAEPNSA) has biased composition (low complexity). Residues 54–58 (DAAFD), 103–104 (SL), and glutamate 133 each bind NAD(+). Lysine 135 (N6-AMP-lysine intermediate) is an active-site residue. The NAD(+) site is built by arginine 156, glutamate 197, lysine 313, and lysine 337. Zn(2+) contacts are provided by cysteine 431, cysteine 434, cysteine 450, and cysteine 456. The BRCT domain occupies 620-709 (QGPRPLEGVT…PEAARAVARV (90 aa)).

The protein belongs to the NAD-dependent DNA ligase family. LigA subfamily. The cofactor is Mg(2+). Mn(2+) is required as a cofactor.

The catalysed reaction is NAD(+) + (deoxyribonucleotide)n-3'-hydroxyl + 5'-phospho-(deoxyribonucleotide)m = (deoxyribonucleotide)n+m + AMP + beta-nicotinamide D-nucleotide.. Functionally, DNA ligase that catalyzes the formation of phosphodiester linkages between 5'-phosphoryl and 3'-hydroxyl groups in double-stranded DNA using NAD as a coenzyme and as the energy source for the reaction. It is essential for DNA replication and repair of damaged DNA. The polypeptide is DNA ligase (Salinispora tropica (strain ATCC BAA-916 / DSM 44818 / JCM 13857 / NBRC 105044 / CNB-440)).